The sequence spans 101 residues: Large ribosomal subunit protein uL24 (101 aa).

The protein belongs to the universal ribosomal protein uL24 family. Part of the 50S ribosomal subunit.

Functionally, one of two assembly initiator proteins, it binds directly to the 5'-end of the 23S rRNA, where it nucleates assembly of the 50S subunit. One of the proteins that surrounds the polypeptide exit tunnel on the outside of the subunit. In Streptococcus agalactiae serotype III (strain NEM316), this protein is Large ribosomal subunit protein uL24.